Here is an 84-residue protein sequence, read N- to C-terminus: MSSGGLLLLLGLLTLWAELTPISGHDRPKFCYLPADPGECMAYIRSFYYDSESKKCKEFIYGGCHGNANNFPTRDKCRQTCRGK.

The N-terminal stretch at 1–24 is a signal peptide; it reads MSSGGLLLLLGLLTLWAELTPISG. One can recognise a BPTI/Kunitz inhibitor domain in the interval 31–81; the sequence is CYLPADPGECMAYIRSFYYDSESKKCKEFIYGGCHGNANNFPTRDKCRQTC. Intrachain disulfides connect C31–C81, C40–C64, and C56–C77.

It belongs to the venom Kunitz-type family. Expressed by the venom gland.

It is found in the secreted. Its function is as follows. Serine protease inhibitor. The sequence is that of Kunitz-type serine protease inhibitor C3 from Daboia siamensis (Eastern Russel's viper).